We begin with the raw amino-acid sequence, 396 residues long: DNA replication and repair protein RecF (396 aa).

30-37 (GANGSGKT) provides a ligand contact to ATP.

Belongs to the RecF family.

The protein localises to the cytoplasm. The RecF protein is involved in DNA metabolism; it is required for DNA replication and normal SOS inducibility. RecF binds preferentially to single-stranded, linear DNA. It also seems to bind ATP. This is DNA replication and repair protein RecF from Thermomicrobium roseum (strain ATCC 27502 / DSM 5159 / P-2).